Consider the following 427-residue polypeptide: Light-independent protochlorophyllide reductase subunit N (427 aa).

[4Fe-4S] cluster-binding residues include Cys30, Cys55, and Cys116.

It belongs to the BchN/ChlN family. Protochlorophyllide reductase is composed of three subunits; BchL, BchN and BchB. Forms a heterotetramer of two BchB and two BchN subunits. The cofactor is [4Fe-4S] cluster.

The enzyme catalyses chlorophyllide a + oxidized 2[4Fe-4S]-[ferredoxin] + 2 ADP + 2 phosphate = protochlorophyllide a + reduced 2[4Fe-4S]-[ferredoxin] + 2 ATP + 2 H2O. Its pathway is porphyrin-containing compound metabolism; bacteriochlorophyll biosynthesis (light-independent). Its function is as follows. Component of the dark-operative protochlorophyllide reductase (DPOR) that uses Mg-ATP and reduced ferredoxin to reduce ring D of protochlorophyllide (Pchlide) to form chlorophyllide a (Chlide). This reaction is light-independent. The NB-protein (BchN-BchB) is the catalytic component of the complex. The sequence is that of Light-independent protochlorophyllide reductase subunit N from Rhodopseudomonas palustris (strain BisA53).